Here is a 367-residue protein sequence, read N- to C-terminus: B2 bradykinin receptor (367 aa).

Over M1 to Q36 the chain is Extracellular. N-linked (GlcNAc...) asparagine glycosylation is found at N3 and N14. The chain crosses the membrane as a helical span at residues A37–L60. Topologically, residues H61–E69 are cytoplasmic. Residues I70–A94 form a helical membrane-spanning segment. At N95 to R107 the chain is on the extracellular side. A disulfide bridge connects residues C106 and C187. The helical transmembrane segment at V108–I129 threads the bilayer. Residues D130–K151 are Cytoplasmic-facing. Position 132 is a phosphotyrosine (Y132). A helical membrane pass occupies residues L152 to M174. Topologically, residues H175 to M197 are extracellular. N-linked (GlcNAc...) asparagine glycosylation occurs at N183. A helical membrane pass occupies residues V198–L224. At Q225 to K243 the chain is on the cytoplasmic side. A helical transmembrane segment spans residues A244–L268. Over D269–D287 the chain is Extracellular. The chain crosses the membrane as a helical span at residues V288–V311. Over G312–Q367 the chain is Cytoplasmic. Y323 carries the post-translational modification Phosphotyrosine. C327 is lipidated: S-palmitoyl cysteine. Phosphoserine is present on S342. At T345 the chain carries Phosphothreonine. A phosphoserine; by GRK6 mark is found at S349 and S351.

The protein belongs to the G-protein coupled receptor 1 family. Bradykinin receptor subfamily. BDKRB2 sub-subfamily. Forms a complex with PECAM1 and GNAQ. Interacts with PECAM1.

The protein resides in the cell membrane. In terms of biological role, receptor for bradykinin. It is associated with G proteins that activate a phosphatidylinositol-calcium second messenger system. In Sus scrofa (Pig), this protein is B2 bradykinin receptor (BDKRB2).